We begin with the raw amino-acid sequence, 416 residues long: Multifunctional CCA protein (416 aa).

Residues Gly8 and Arg11 each contribute to the ATP site. CTP-binding residues include Gly8 and Arg11. Residues Asp21 and Asp23 each coordinate Mg(2+). ATP is bound by residues Arg91, Arg137, and Arg140. Positions 91, 137, and 140 each coordinate CTP. The region spanning 228-329 is the HD domain; the sequence is TGLHTMLVLA…IKLFDKADFW (102 aa).

The protein belongs to the tRNA nucleotidyltransferase/poly(A) polymerase family. Bacterial CCA-adding enzyme type 1 subfamily. As to quaternary structure, monomer. Can also form homodimers and oligomers. Mg(2+) is required as a cofactor. Ni(2+) serves as cofactor.

The enzyme catalyses a tRNA precursor + 2 CTP + ATP = a tRNA with a 3' CCA end + 3 diphosphate. It catalyses the reaction a tRNA with a 3' CCA end + 2 CTP + ATP = a tRNA with a 3' CCACCA end + 3 diphosphate. Its function is as follows. Catalyzes the addition and repair of the essential 3'-terminal CCA sequence in tRNAs without using a nucleic acid template. Adds these three nucleotides in the order of C, C, and A to the tRNA nucleotide-73, using CTP and ATP as substrates and producing inorganic pyrophosphate. tRNA 3'-terminal CCA addition is required both for tRNA processing and repair. Also involved in tRNA surveillance by mediating tandem CCA addition to generate a CCACCA at the 3' terminus of unstable tRNAs. While stable tRNAs receive only 3'-terminal CCA, unstable tRNAs are marked with CCACCA and rapidly degraded. This Shewanella sp. (strain ANA-3) protein is Multifunctional CCA protein.